The following is a 228-amino-acid chain: UPF0173 metal-dependent hydrolase LMOf2365_1599 (228 aa).

This sequence belongs to the UPF0173 family.

The sequence is that of UPF0173 metal-dependent hydrolase LMOf2365_1599 from Listeria monocytogenes serotype 4b (strain F2365).